The sequence spans 271 residues: Orotidine 5'-phosphate decarboxylase (271 aa).

Catalysis depends on Lys-95, which acts as the Proton donor.

It belongs to the OMP decarboxylase family. Type 2 subfamily.

The enzyme catalyses orotidine 5'-phosphate + H(+) = UMP + CO2. The protein operates within pyrimidine metabolism; UMP biosynthesis via de novo pathway; UMP from orotate: step 2/2. This chain is Orotidine 5'-phosphate decarboxylase (pyrF), found in Ralstonia nicotianae (strain ATCC BAA-1114 / GMI1000) (Ralstonia solanacearum).